The primary structure comprises 270 residues: 4-diphosphocytidyl-2-C-methyl-D-erythritol kinase (270 aa).

Lys8 is an active-site residue. 90-100 provides a ligand contact to ATP; that stretch reads PIGAGLGGGSS. The active site involves Asp132.

This sequence belongs to the GHMP kinase family. IspE subfamily.

The catalysed reaction is 4-CDP-2-C-methyl-D-erythritol + ATP = 4-CDP-2-C-methyl-D-erythritol 2-phosphate + ADP + H(+). It functions in the pathway isoprenoid biosynthesis; isopentenyl diphosphate biosynthesis via DXP pathway; isopentenyl diphosphate from 1-deoxy-D-xylulose 5-phosphate: step 3/6. Its function is as follows. Catalyzes the phosphorylation of the position 2 hydroxy group of 4-diphosphocytidyl-2C-methyl-D-erythritol. The chain is 4-diphosphocytidyl-2-C-methyl-D-erythritol kinase from Cytophaga hutchinsonii (strain ATCC 33406 / DSM 1761 / CIP 103989 / NBRC 15051 / NCIMB 9469 / D465).